Reading from the N-terminus, the 73-residue chain is MKPINIQDQFLNQIRKENTYVTVFLLNGFQLRGQVKGFDNFTVLLESEGKQQLIYKHAISTFAPQKNVQLELE.

The 61-residue stretch at Asp-8–Val-68 folds into the Sm domain.

The protein belongs to the Hfq family. Homohexamer.

Its function is as follows. RNA chaperone that binds small regulatory RNA (sRNAs) and mRNAs to facilitate mRNA translational regulation in response to envelope stress, environmental stress and changes in metabolite concentrations. Also binds with high specificity to tRNAs. The protein is RNA-binding protein Hfq of Bacillus subtilis (strain 168).